Reading from the N-terminus, the 183-residue chain is A-type ATP synthase subunit E (183 aa).

Belongs to the V-ATPase E subunit family. In terms of assembly, has multiple subunits, A(3), B(3), C, D, E, F, G, I and K(x); there may be a few other subunits as well.

It localises to the cell membrane. Component of the A-type ATP synthase that produces ATP from ADP in the presence of a proton gradient across the membrane. This chain is A-type ATP synthase subunit E, found in Methanosarcina mazei (strain ATCC BAA-159 / DSM 3647 / Goe1 / Go1 / JCM 11833 / OCM 88) (Methanosarcina frisia).